A 304-amino-acid chain; its full sequence is Olfactory receptor 8G2 (304 aa).

The Extracellular portion of the chain corresponds to 1-41 (MVFLSSVETDQRKMSAGNHSSVTEFILAGLSEQPELQLRLF). N-linked (GlcNAc...) asparagine glycosylation is present at asparagine 18. Residues 42-62 (LLFLGIYVVTVVGNLSMITLI) form a helical membrane-spanning segment. Residues 63-69 (GLSSHLH) are Cytoplasmic-facing. A helical membrane pass occupies residues 70-90 (TPMYYFLSGLSFIDLCHSTII). At 91 to 110 (TPKMLVNFVTEKNIISYPEC) the chain is on the extracellular side. An intrachain disulfide couples cysteine 110 to cysteine 192. The helical transmembrane segment at 111–130 (MTQLYFFLIFAIAECHMLAV) threads the bilayer. Over 131 to 154 (TAYDRYVAICSPLLYNVIMSYHHC) the chain is Cytoplasmic. A helical membrane pass occupies residues 155-175 (FWLTVGVYVLGILGSTIHTGF). Residues 176 to 193 (MLRLFLCKTNVINHYFCD) lie on the Extracellular side of the membrane. Residues 194 to 214 (LFPLLGLSCSSTYINELLVLV) form a helical membrane-spanning segment. The Cytoplasmic segment spans residues 215–217 (LSA). The chain crosses the membrane as a helical span at residues 218–238 (FNILTPALTILASYIFIIASI). Topologically, residues 239–257 (LRIRSTEGRSKAFSTCSSH) are extracellular. Residues 258 to 278 (ILAVAVFFGSAAFMYLQPSSV) form a helical membrane-spanning segment. Residues 279-304 (SSMDQRKVSSVFYTTIVPMLNPQSIA) are Cytoplasmic-facing.

This sequence belongs to the G-protein coupled receptor 1 family.

It localises to the cell membrane. In terms of biological role, odorant receptor. The chain is Olfactory receptor 8G2 from Homo sapiens (Human).